The sequence spans 168 residues: Inorganic pyrophosphatase (168 aa).

Positions 23, 37, and 49 each coordinate substrate. Aspartate 59, aspartate 64, and aspartate 96 together coordinate Mg(2+). Tyrosine 133 provides a ligand contact to substrate.

This sequence belongs to the PPase family. As to quaternary structure, homohexamer. Mg(2+) serves as cofactor.

The protein resides in the cytoplasm. The catalysed reaction is diphosphate + H2O = 2 phosphate + H(+). In terms of biological role, catalyzes the hydrolysis of inorganic pyrophosphate (PPi) forming two phosphate ions. In Methanosarcina acetivorans (strain ATCC 35395 / DSM 2834 / JCM 12185 / C2A), this protein is Inorganic pyrophosphatase.